A 1485-amino-acid chain; its full sequence is Chromosome partition protein MukB (1485 aa).

Residue 34 to 41 (GGNGAGKS) coordinates ATP. Coiled coils occupy residues 337-480 (LNLV…QAYQ), 509-605 (QHLA…PVWL), 780-805 (RAAR…ATLS), 835-915 (EAEI…IQQH), 977-1116 (GMLT…AKAG), and 1210-1235 (EAIE…KLAI). A flexible hinge region spans residues 666-783 (PSGAEDARLI…EVPLFGRAAR (118 aa)).

This sequence belongs to the SMC family. MukB subfamily. In terms of assembly, homodimerization via its hinge domain. Binds to DNA via its C-terminal region. Interacts, and probably forms a ternary complex, with MukE and MukF via its C-terminal region. The complex formation is stimulated by calcium or magnesium. Interacts with tubulin-related protein FtsZ.

Its subcellular location is the cytoplasm. It is found in the nucleoid. Plays a central role in chromosome condensation, segregation and cell cycle progression. Functions as a homodimer, which is essential for chromosome partition. Involved in negative DNA supercoiling in vivo, and by this means organize and compact chromosomes. May achieve or facilitate chromosome segregation by condensation DNA from both sides of a centrally located replisome during cell division. The sequence is that of Chromosome partition protein MukB from Yersinia pestis bv. Antiqua (strain Antiqua).